Consider the following 408-residue polypeptide: uncharacterized protein (408 aa).

Residues E35, D61, and N96 each coordinate a divalent metal cation.

The protein belongs to the metallophosphoesterase superfamily. A divalent metal cation serves as cofactor.

This is an uncharacterized protein from Bacillus subtilis (strain 168).